A 40-amino-acid polypeptide reads, in one-letter code: Lucifensin (40 aa).

3 cysteine pairs are disulfide-bonded: C3–C30, C16–C36, and C20–C38.

This sequence belongs to the invertebrate defensin family. Type 1 subfamily. In terms of processing, the disulfide bonds are essential for antimicrobial activity. In terms of tissue distribution, larval fat body, hemolymph and salivary glands (at protein level).

Its subcellular location is the secreted. In terms of biological role, shows strong antibacterial activity against the Gram-positive bacterium M.luteus. Also shows antibacterial activity against the Gram-positive bacteria E.fecalis, S.aureus, S.carnosus, S.pneumoniae and S.pyogenes and against a number of methicillin-resistant S.aureus and glycopeptide-intermediate S.aureus isolates. Does not show antibacterial activity against Gram-negative bacteria or antifungal activity against C.utilis. Shows slight antifungal activity against C.albicans. This chain is Lucifensin, found in Lucilia cuprina (Green bottle fly).